Consider the following 150-residue polypeptide: Macrodomain Ter protein (150 aa).

The protein belongs to the MatP family. In terms of assembly, homodimer.

The protein localises to the cytoplasm. Functionally, required for spatial organization of the terminus region of the chromosome (Ter macrodomain) during the cell cycle. Prevents early segregation of duplicated Ter macrodomains during cell division. Binds specifically to matS, which is a 13 bp signature motif repeated within the Ter macrodomain. This chain is Macrodomain Ter protein, found in Shigella boydii serotype 18 (strain CDC 3083-94 / BS512).